The following is a 264-amino-acid chain: 3-methyl-2-oxobutanoate hydroxymethyltransferase (264 aa).

Mg(2+) is bound by residues Asp45 and Asp84. 3-methyl-2-oxobutanoate is bound by residues 45–46 (DS), Asp84, and Lys112. Mg(2+) is bound at residue Glu114. The active-site Proton acceptor is the Glu181.

This sequence belongs to the PanB family. Homodecamer; pentamer of dimers. Mg(2+) serves as cofactor.

It is found in the cytoplasm. The catalysed reaction is 3-methyl-2-oxobutanoate + (6R)-5,10-methylene-5,6,7,8-tetrahydrofolate + H2O = 2-dehydropantoate + (6S)-5,6,7,8-tetrahydrofolate. It functions in the pathway cofactor biosynthesis; (R)-pantothenate biosynthesis; (R)-pantoate from 3-methyl-2-oxobutanoate: step 1/2. Functionally, catalyzes the reversible reaction in which hydroxymethyl group from 5,10-methylenetetrahydrofolate is transferred onto alpha-ketoisovalerate to form ketopantoate. This is 3-methyl-2-oxobutanoate hydroxymethyltransferase from Shewanella pealeana (strain ATCC 700345 / ANG-SQ1).